Reading from the N-terminus, the 428-residue chain is L-gulono-1,4-lactone dehydrogenase (428 aa).

Residues 12–179 enclose the FAD-binding PCMH-type domain; sequence QVCAPSAIVR…SQVTLQTVPL (168 aa).

This sequence belongs to the oxygen-dependent FAD-linked oxidoreductase family. A divalent metal cation serves as cofactor.

It catalyses the reaction L-gulono-1,4-lactone + 2 Fe(III)-[cytochrome c] = L-ascorbate + 2 Fe(II)-[cytochrome c] + 3 H(+). Its pathway is cofactor biosynthesis; L-ascorbate biosynthesis. In terms of biological role, oxidizes L-gulono-1,4-lactone to L-xylo-hexulonolactone which spontaneously isomerizes to L-ascorbate. The polypeptide is L-gulono-1,4-lactone dehydrogenase (Mycobacterium tuberculosis (strain CDC 1551 / Oshkosh)).